The primary structure comprises 403 residues: Arginine deiminase (403 aa).

Cys-388 (amidino-cysteine intermediate) is an active-site residue.

The protein belongs to the arginine deiminase family.

The protein resides in the cytoplasm. The enzyme catalyses L-arginine + H2O = L-citrulline + NH4(+). Its pathway is amino-acid degradation; L-arginine degradation via ADI pathway; carbamoyl phosphate from L-arginine: step 1/2. This chain is Arginine deiminase, found in Mycoplasma capricolum subsp. capricolum (strain California kid / ATCC 27343 / NCTC 10154).